We begin with the raw amino-acid sequence, 23 residues long: Hongotoxin-4 (23 aa).

The protein belongs to the short scorpion toxin superfamily. Potassium channel inhibitor family. Alpha-KTx 02 subfamily. As to expression, expressed by the venom gland.

It localises to the secreted. Its function is as follows. Potent selective inhibitor of Kv1/KCNA voltage-gated potassium channels. The polypeptide is Hongotoxin-4 (Centruroides limbatus (Bark scorpion)).